The chain runs to 1040 residues: Multidrug resistance protein MdtB (1040 aa).

12 consecutive transmembrane segments (helical) span residues 16 to 36, 342 to 362, 373 to 393, 396 to 416, 440 to 460, 472 to 492, 537 to 557, 865 to 885, 888 to 908, 911 to 931, 968 to 988, and 1002 to 1022; these read FILR…AGLV, DVQF…YLFL, IAVP…GFSV, LTLM…IVVI, IGFT…PLLF, FAVT…TLTP, WITL…YIVI, STIW…GVLY, FIHP…ALLA, ISGS…IGIV, ILMT…STGV, and GGLV…YLLF.

This sequence belongs to the resistance-nodulation-cell division (RND) (TC 2.A.6) family. MdtB subfamily. As to quaternary structure, part of a tripartite efflux system composed of MdtA, MdtB and MdtC. MdtB forms a heteromultimer with MdtC.

Its subcellular location is the cell inner membrane. The polypeptide is Multidrug resistance protein MdtB (Musicola paradisiaca (strain Ech703) (Dickeya paradisiaca)).